Here is a 249-residue protein sequence, read N- to C-terminus: 2,3-bisphosphoglycerate-dependent phosphoglycerate mutase (249 aa).

Residues R8–N15, T21–G22, R60, E87–Y90, K98, R114–R115, and G183–N184 contribute to the substrate site. H9 acts as the Tele-phosphohistidine intermediate in catalysis. The active-site Proton donor/acceptor is the E87.

It belongs to the phosphoglycerate mutase family. BPG-dependent PGAM subfamily.

It carries out the reaction (2R)-2-phosphoglycerate = (2R)-3-phosphoglycerate. Its pathway is carbohydrate degradation; glycolysis; pyruvate from D-glyceraldehyde 3-phosphate: step 3/5. Its function is as follows. Catalyzes the interconversion of 2-phosphoglycerate and 3-phosphoglycerate. The sequence is that of 2,3-bisphosphoglycerate-dependent phosphoglycerate mutase from Caldanaerobacter subterraneus subsp. tengcongensis (strain DSM 15242 / JCM 11007 / NBRC 100824 / MB4) (Thermoanaerobacter tengcongensis).